The primary structure comprises 143 residues: Ribosome-binding factor A (143 aa).

The disordered stretch occupies residues Lys-119–Asp-143. Residues Gln-122–Ser-133 are compositionally biased toward polar residues.

It belongs to the RbfA family. Monomer. Binds 30S ribosomal subunits, but not 50S ribosomal subunits or 70S ribosomes.

The protein localises to the cytoplasm. One of several proteins that assist in the late maturation steps of the functional core of the 30S ribosomal subunit. Associates with free 30S ribosomal subunits (but not with 30S subunits that are part of 70S ribosomes or polysomes). Required for efficient processing of 16S rRNA. May interact with the 5'-terminal helix region of 16S rRNA. The chain is Ribosome-binding factor A from Shewanella frigidimarina (strain NCIMB 400).